A 1523-amino-acid polypeptide reads, in one-letter code: ATP-binding cassette sub-family C member 3 (1523 aa).

At 1–35 (MDRLCGSGELGSKFWDSNLSIYTNTPDLTPCFQNS) the chain is on the extracellular side. N18 carries an N-linked (GlcNAc...) asparagine glycan. A helical transmembrane segment spans residues 36-56 (LLAWVPCIYLWAALPCYLFYL). Residues 57–75 (RHHQLGYIVLSWLSRLKTA) are Cytoplasmic-facing. A helical membrane pass occupies residues 76-96 (LGVLLWCVSWVDLFYSFHGLI). Residues 97-102 (HGSSPA) are Extracellular-facing. Residues 103 to 123 (PVFFVTPLVVGITMLLATLLI) form a helical membrane-spanning segment. Topologically, residues 124–129 (QYERLR) are cytoplasmic. The helical transmembrane segment at 130–150 (GVQSSGVLIIFWLLCVICAII) threads the bilayer. At 151 to 170 (PFRSKILSALAEGKILDPFR) the chain is on the extracellular side. The chain crosses the membrane as a helical span at residues 171–191 (FTTFYIYFALVFCALILSCFK). At 192–301 (EKPPLFSPEN…KSKQPSFLRA (110 aa)) the chain is on the cytoplasmic side. The helical transmembrane segment at 302-324 (LVRTFTSSLLMSACFNLIQNLLG) threads the bilayer. The region spanning 310–593 (LLMSACFNLI…LPQLISGLTQ (284 aa)) is the ABC transmembrane type-1 1 domain. The Extracellular segment spans residues 325–345 (FVNPQLLSILIRFISDPTAPT). Residues 346-366 (WWGFLLAGLMFLSSTMQTLIL) form a helical membrane-spanning segment. At 367–419 (HQYYHCIFVMALRLRTAIIGVIYRKALVITNSVKRESTVGEMVNLMSVDAQRF) the chain is on the cytoplasmic side. A helical transmembrane segment spans residues 420 to 440 (MDVSPFINLLWSAPLQVILAI). Y441 is a topological domain (extracellular). A helical membrane pass occupies residues 442–462 (FLWQILGPSALAGVAVIVLLI). The Cytoplasmic portion of the chain corresponds to 463 to 535 (PLNGAVSMKM…KGAYLQAIST (73 aa)). A helical transmembrane segment spans residues 536 to 556 (FIWICTPFLVTLITLGVYVYV). The Extracellular segment spans residues 557–567 (DESNVLDAEKA). A helical membrane pass occupies residues 568-588 (FVSLSLFNILKIPLNMLPQLI). The Cytoplasmic portion of the chain corresponds to 589 to 967 (SGLTQASVSL…YAKSMGLCTT (379 aa)). The ABC transporter 1 domain maps to 626–850 (ITIHNGTFTW…DGSFANFLRN (225 aa)). An ATP-binding site is contributed by 660-667 (GPVGCGKS). S903 and S906 each carry phosphoserine. A compositionally biased stretch (polar residues) spans 903–915 (SSLSSEGEVQNRT). Positions 903–923 (SSLSSEGEVQNRTMPKKHTNS) are disordered. The ABC transmembrane type-1 2 domain occupies 967 to 1248 (TLSICLLYGG…MIRMISDLES (282 aa)). A helical membrane pass occupies residues 968–988 (LSICLLYGGQSAAAIGANVWL). Over 989 to 1013 (SAWSNDAEEHGQQNKTSVRLGVYAA) the chain is Extracellular. N1002 is a glycosylation site (N-linked (GlcNAc...) asparagine). A helical membrane pass occupies residues 1014–1034 (LGILQGLLVMLSAFTMVVGAI). The Cytoplasmic portion of the chain corresponds to 1035–1071 (QAARLLHEALLHNKIRSPQSFFDTTPSGRILNRFSKD). Residues 1072–1092 (IYVIDEVLAPTILMLLNSFFT) traverse the membrane as a helical segment. The Extracellular portion of the chain corresponds to 1093 to 1096 (SIST). The helical transmembrane segment at 1097–1117 (IMVIVASTPLFMVVVLPLAVL) threads the bilayer. Residues 1118-1191 (YGFVQRFYVA…YPYIASNRWL (74 aa)) are Cytoplasmic-facing. The chain crosses the membrane as a helical span at residues 1192–1212 (GVHVEFVGNCVVLFAALFAVI). Residues 1213-1219 (GRNSLNP) lie on the Extracellular side of the membrane. The helical transmembrane segment at 1220 to 1240 (GLVGLSVSYALQVTMALNWMI) threads the bilayer. Residues 1241 to 1523 (RMISDLESNI…YGMAKDAGLA (283 aa)) are Cytoplasmic-facing. Residues 1287-1519 (FRNYSVRYRP…GGIFYGMAKD (233 aa)) enclose the ABC transporter 2 domain. Residue 1319-1326 (GRTGAGKS) participates in ATP binding.

The protein belongs to the ABC transporter superfamily. ABCC family. Conjugate transporter (TC 3.A.1.208) subfamily. In terms of tissue distribution, detected throughout the gastrointestinal tract, liver, lung, pancreas, bladder, gall bladder and at low levels in the adrenal gland.

Its subcellular location is the basolateral cell membrane. The protein resides in the basal cell membrane. It catalyses the reaction an S-substituted glutathione(in) + ATP + H2O = an S-substituted glutathione(out) + ADP + phosphate + H(+). The catalysed reaction is ATP + H2O + xenobioticSide 1 = ADP + phosphate + xenobioticSide 2.. It carries out the reaction 17beta-estradiol 17-O-(beta-D-glucuronate)(in) + ATP + H2O = 17beta-estradiol 17-O-(beta-D-glucuronate)(out) + ADP + phosphate + H(+). The enzyme catalyses dehydroepiandrosterone 3-sulfate(in) + ATP + H2O = dehydroepiandrosterone 3-sulfate(out) + ADP + phosphate + H(+). It catalyses the reaction leukotriene C4(in) + ATP + H2O = leukotriene C4(out) + ADP + phosphate + H(+). The catalysed reaction is taurocholate(in) + ATP + H2O = taurocholate(out) + ADP + phosphate + H(+). It carries out the reaction glycocholate(in) + ATP + H2O = glycocholate(out) + ADP + phosphate + H(+). The enzyme catalyses taurolithocholate 3-sulfate(in) + ATP + H2O = taurolithocholate 3-sulfate(out) + ADP + phosphate + H(+). It catalyses the reaction taurochenodeoxycholate 3-sulfate(in) + ATP + H2O = taurochenodeoxycholate 3-sulfate(out) + ADP + phosphate + H(+). The catalysed reaction is (4Z,15Z)-bilirubin IXalpha C8-beta-D-glucuronoside(in) + ATP + H2O = (4Z,15Z)-bilirubin IXalpha C8-beta-D-glucuronoside(out) + ADP + phosphate + H(+). It carries out the reaction (4Z,15Z)-bilirubin IXalpha C8,C12-beta-D-bisglucuronoside(in) + ATP + H2O = (4Z,15Z)-bilirubin IXalpha C8,C12-beta-D-bisglucuronoside(out) + ADP + phosphate + H(+). ATP-dependent transporter of the ATP-binding cassette (ABC) family that binds and hydrolyzes ATP to enable active transport of various substrates including many drugs, toxicants and endogenous compound across cell membranes. Transports glucuronide conjugates such as bilirubin diglucuronide, estradiol-17-beta-o-glucuronide and GSH conjugates such as leukotriene C4 (LTC4). Transports also various bile salts (taurocholate, glycocholate, taurochenodeoxycholate-3-sulfate, taurolithocholate- 3-sulfate). Does not contribute substantially to bile salt physiology but provides an alternative route for the export of bile acids and glucuronides from cholestatic hepatocytes. May contribute to regulate the transport of organic compounds in testes across the blood-testis-barrier. The chain is ATP-binding cassette sub-family C member 3 (Abcc3) from Mus musculus (Mouse).